The primary structure comprises 168 residues: Auxin-responsive protein IAA1 (168 aa).

The segment at 1 to 74 (MEVTNGLNLK…NRKNNNNKNV (74 aa)) is disordered. Residues 14–18 (LRLGL) carry the EAR-like (transcriptional repression) motif. The span at 23-34 (EEQQLELSCVRS) shows a compositional bias: polar residues. Residues 74–161 (VSYVKVSMDG…SCQKLRIMKG (88 aa)) form the PB1 domain.

Belongs to the Aux/IAA family. In terms of assembly, homodimers and heterodimers. Interacts with the auxin-responsive protein IAA2. Interacts with TPL. In terms of processing, phosphorylated by phytochrome A in vitro. Preferentially expressed in stems, leaves and flowers.

It localises to the nucleus. Its function is as follows. Aux/IAA proteins are short-lived transcriptional factors that function as repressors of early auxin response genes at low auxin concentrations. Repression is thought to result from the interaction with auxin response factors (ARFs), proteins that bind to the auxin-responsive promoter element (AuxRE). Formation of heterodimers with ARF proteins may alter their ability to modulate early auxin response genes expression. This is Auxin-responsive protein IAA1 (IAA1) from Arabidopsis thaliana (Mouse-ear cress).